A 150-amino-acid polypeptide reads, in one-letter code: MNNKVGIVHSLKDGQKYMDIWPMRKELNPLFPEQRVIKATRFAIKVMPAVAAISVLTQMVFANTQAMPQAIVVALFAMSLPLQGIWWLGHRANTQLPPALASWYRELYMKIVETGFALEPIKSKPRYKELAQVLNRAFRQLDDTALERWF.

A run of 2 helical transmembrane segments spans residues 42-62 (FAIKVMPAVAAISVLTQMVFA) and 70-90 (AIVVALFAMSLPLQGIWWLGH).

The protein belongs to the UPF0208 family.

The protein localises to the cell inner membrane. This chain is UPF0208 membrane protein VC_1099, found in Vibrio cholerae serotype O1 (strain ATCC 39315 / El Tor Inaba N16961).